The following is a 909-amino-acid chain: Yellow mounds protein A (909 aa).

The MIF4G domain maps to 7–283 (LNVVSRILNK…KNLFELKNNK (277 aa)). Disordered stretches follow at residues 178 to 232 (SMGG…NNNI), 415 to 439 (MESS…SGIK), 460 to 537 (INLP…SSAP), 627 to 689 (VPPV…SEAR), and 704 to 774 (SLSG…AKKH). Over residues 204 to 215 (DDDDHDEEDNEN) the composition is skewed to acidic residues. Low complexity-rich tracts occupy residues 216–231 (NYEN…NNNN) and 417–436 (SSSN…SSSS). Residues 473-490 (RSNSPSLSSVVKQPQSQQ) are compositionally biased toward polar residues. The span at 491 to 525 (NNNNNNNNNNNNTTITTTTSSNNNINNNNNNNNNN) shows a compositional bias: low complexity. Residues 721-738 (STPTLKSTPAIVQNGGSI) are compositionally biased toward polar residues. Positions 739 to 756 (TSTSSSSSSSSSSSSSTT) are enriched in low complexity. The stretch at 845-877 (TMLFDLEEMAQEQQNLEKQNDQQQNLLTQNNQI) forms a coiled coil.

Plays as essential role in regulating terminal differentiation. This chain is Yellow mounds protein A (yelA), found in Dictyostelium discoideum (Social amoeba).